The following is a 203-amino-acid chain: Peptide deformylase (203 aa).

Residues Cys130 and His173 each coordinate Fe cation. Glu174 is a catalytic residue. Residue His177 participates in Fe cation binding.

It belongs to the polypeptide deformylase family. It depends on Fe(2+) as a cofactor.

It carries out the reaction N-terminal N-formyl-L-methionyl-[peptide] + H2O = N-terminal L-methionyl-[peptide] + formate. Its function is as follows. Removes the formyl group from the N-terminal Met of newly synthesized proteins. Requires at least a dipeptide for an efficient rate of reaction. N-terminal L-methionine is a prerequisite for activity but the enzyme has broad specificity at other positions. The polypeptide is Peptide deformylase (Streptococcus pneumoniae serotype 4 (strain ATCC BAA-334 / TIGR4)).